The primary structure comprises 131 residues: Cell cycle protein GpsB (131 aa).

Residues Leu-39–Val-76 are a coiled coil. Residues Lys-111–Tyr-131 are disordered. A compositionally biased stretch (basic and acidic residues) spans Val-117–Tyr-131.

It belongs to the GpsB family. Forms polymers through the coiled coil domains. Interacts with PBP1, MreC and EzrA.

It localises to the cytoplasm. Divisome component that associates with the complex late in its assembly, after the Z-ring is formed, and is dependent on DivIC and PBP2B for its recruitment to the divisome. Together with EzrA, is a key component of the system that regulates PBP1 localization during cell cycle progression. Its main role could be the removal of PBP1 from the cell pole after pole maturation is completed. Also contributes to the recruitment of PBP1 to the division complex. Not essential for septum formation. The chain is Cell cycle protein GpsB from Lacticaseibacillus casei (strain BL23) (Lactobacillus casei).